Here is a 150-residue protein sequence, read N- to C-terminus: Large ribosomal subunit protein bL9 (150 aa).

This sequence belongs to the bacterial ribosomal protein bL9 family.

Its function is as follows. Binds to the 23S rRNA. The protein is Large ribosomal subunit protein bL9 of Shewanella pealeana (strain ATCC 700345 / ANG-SQ1).